A 340-amino-acid polypeptide reads, in one-letter code: TD and POZ domain-containing protein 5 (340 aa).

The region spanning Glu-19 to Val-149 is the MATH domain. Positions Thr-188–Gln-255 constitute a BTB domain.

The protein belongs to the Tdpoz family.

The sequence is that of TD and POZ domain-containing protein 5 from Mus musculus (Mouse).